A 37-amino-acid chain; its full sequence is Large ribosomal subunit protein bL36 (37 aa).

The protein belongs to the bacterial ribosomal protein bL36 family.

In Nitratidesulfovibrio vulgaris (strain DSM 19637 / Miyazaki F) (Desulfovibrio vulgaris), this protein is Large ribosomal subunit protein bL36.